Here is a 33-residue protein sequence, read N- to C-terminus: Brevinin-2Rh (33 aa).

A disulfide bond links Cys-27 and Cys-33.

In terms of tissue distribution, expressed by the skin glands.

The protein resides in the secreted. Its function is as follows. Antimicrobial peptide. This is Brevinin-2Rh from Pelophylax ridibundus (Marsh frog).